We begin with the raw amino-acid sequence, 172 residues long: Protein GrpE (172 aa).

A disordered region spans residues M1–K24.

This sequence belongs to the GrpE family. In terms of assembly, homodimer.

It is found in the cytoplasm. Its function is as follows. Participates actively in the response to hyperosmotic and heat shock by preventing the aggregation of stress-denatured proteins, in association with DnaK and GrpE. It is the nucleotide exchange factor for DnaK and may function as a thermosensor. Unfolded proteins bind initially to DnaJ; upon interaction with the DnaJ-bound protein, DnaK hydrolyzes its bound ATP, resulting in the formation of a stable complex. GrpE releases ADP from DnaK; ATP binding to DnaK triggers the release of the substrate protein, thus completing the reaction cycle. Several rounds of ATP-dependent interactions between DnaJ, DnaK and GrpE are required for fully efficient folding. In Xanthomonas oryzae pv. oryzae (strain PXO99A), this protein is Protein GrpE.